The sequence spans 351 residues: Molybdenum import ATP-binding protein ModC (351 aa).

An ABC transporter domain is found at 1–229 (MLKINVKKQL…PLFLPWKLED (229 aa)). 31–38 (GLSGSGKT) lines the ATP pocket. The Mop domain maps to 289–351 (KTSIRNILHG…FAQIKAVSVL (63 aa)).

This sequence belongs to the ABC transporter superfamily. Molybdate importer (TC 3.A.1.8) family. The complex is composed of two ATP-binding proteins (ModC), two transmembrane proteins (ModB) and a solute-binding protein (ModA).

Its subcellular location is the cell inner membrane. It carries out the reaction molybdate(out) + ATP + H2O = molybdate(in) + ADP + phosphate + H(+). Its function is as follows. Part of the ABC transporter complex ModABC involved in molybdenum import. Responsible for energy coupling to the transport system. This chain is Molybdenum import ATP-binding protein ModC, found in Pasteurella multocida (strain Pm70).